The sequence spans 447 residues: N-succinylarginine dihydrolase (447 aa).

Substrate contacts are provided by residues 19–28 (AGLSFGNEAS), N110, and 137–138 (HR). The active site involves E174. Residue R212 coordinates substrate. The active site involves H248. Substrate is bound by residues D250 and N359. Catalysis depends on C365, which acts as the Nucleophile.

Belongs to the succinylarginine dihydrolase family. In terms of assembly, homodimer.

The catalysed reaction is N(2)-succinyl-L-arginine + 2 H2O + 2 H(+) = N(2)-succinyl-L-ornithine + 2 NH4(+) + CO2. It functions in the pathway amino-acid degradation; L-arginine degradation via AST pathway; L-glutamate and succinate from L-arginine: step 2/5. Its function is as follows. Catalyzes the hydrolysis of N(2)-succinylarginine into N(2)-succinylornithine, ammonia and CO(2). The polypeptide is N-succinylarginine dihydrolase (Salmonella typhimurium (strain LT2 / SGSC1412 / ATCC 700720)).